Here is a 216-residue protein sequence, read N- to C-terminus: Peptide deformylase (216 aa).

Fe cation-binding residues include Cys134 and His178. Residue Glu179 is part of the active site. Residue His182 participates in Fe cation binding.

The protein belongs to the polypeptide deformylase family. Fe(2+) serves as cofactor.

The catalysed reaction is N-terminal N-formyl-L-methionyl-[peptide] + H2O = N-terminal L-methionyl-[peptide] + formate. Functionally, removes the formyl group from the N-terminal Met of newly synthesized proteins. Requires at least a dipeptide for an efficient rate of reaction. N-terminal L-methionine is a prerequisite for activity but the enzyme has broad specificity at other positions. The sequence is that of Peptide deformylase from Mycoplasma pneumoniae (strain ATCC 29342 / M129 / Subtype 1) (Mycoplasmoides pneumoniae).